A 411-amino-acid chain; its full sequence is Methylthioribose-1-phosphate isomerase (411 aa).

Residue aspartate 284 is the Proton donor of the active site.

It belongs to the eIF-2B alpha/beta/delta subunits family. MtnA subfamily.

It is found in the cytoplasm. The protein localises to the nucleus. It carries out the reaction 5-(methylsulfanyl)-alpha-D-ribose 1-phosphate = 5-(methylsulfanyl)-D-ribulose 1-phosphate. It participates in amino-acid biosynthesis; L-methionine biosynthesis via salvage pathway; L-methionine from S-methyl-5-thio-alpha-D-ribose 1-phosphate: step 1/6. In terms of biological role, catalyzes the interconversion of methylthioribose-1-phosphate (MTR-1-P) into methylthioribulose-1-phosphate (MTRu-1-P). In Komagataella phaffii (strain GS115 / ATCC 20864) (Yeast), this protein is Methylthioribose-1-phosphate isomerase.